The primary structure comprises 410 residues: Probable protein S-acyltransferase 6 (410 aa).

A run of 2 helical transmembrane segments spans residues 45–65 (LGLT…FVAS) and 76–96 (GVSI…LLML). The interval 108–129 (NSHPPEPEVVDGNTGSGTSQTP) is disordered. A DHHC domain is found at 147–197 (KYCDTCMLYRPPRCSHCSICNNCVERFDHHCPWVGQCIAQRNYRFFFMFVF). Cys-177 (S-palmitoyl cysteine intermediate) is an active-site residue. Helical transmembrane passes span 191–211 (FFFM…AFCC) and 235–255 (SIAL…LTCF). Ser-325 is modified (phosphoserine).

The protein belongs to the DHHC palmitoyltransferase family.

The protein resides in the cell membrane. It carries out the reaction L-cysteinyl-[protein] + hexadecanoyl-CoA = S-hexadecanoyl-L-cysteinyl-[protein] + CoA. Its function is as follows. Palmitoyl acyltransferase. The chain is Probable protein S-acyltransferase 6 (PAT06) from Arabidopsis thaliana (Mouse-ear cress).